The chain runs to 61 residues: Small ribosomal subunit protein uS14 (61 aa).

Residues Cys-24, Cys-27, Cys-40, and Cys-43 each contribute to the Zn(2+) site.

Belongs to the universal ribosomal protein uS14 family. Zinc-binding uS14 subfamily. In terms of assembly, part of the 30S ribosomal subunit. Contacts proteins S3 and S10. Requires Zn(2+) as cofactor.

In terms of biological role, binds 16S rRNA, required for the assembly of 30S particles and may also be responsible for determining the conformation of the 16S rRNA at the A site. This chain is Small ribosomal subunit protein uS14, found in Geobacillus thermodenitrificans (strain NG80-2).